Consider the following 601-residue polypeptide: Elongation factor 4 (601 aa).

The region spanning 6-188 (KNIRNFSIIA…QIIKKIPAPD (183 aa)) is the tr-type G domain. Residues 18-23 (DHGKST) and 135-138 (NKID) each bind GTP.

This sequence belongs to the TRAFAC class translation factor GTPase superfamily. Classic translation factor GTPase family. LepA subfamily.

It localises to the cell membrane. It carries out the reaction GTP + H2O = GDP + phosphate + H(+). Its function is as follows. Required for accurate and efficient protein synthesis under certain stress conditions. May act as a fidelity factor of the translation reaction, by catalyzing a one-codon backward translocation of tRNAs on improperly translocated ribosomes. Back-translocation proceeds from a post-translocation (POST) complex to a pre-translocation (PRE) complex, thus giving elongation factor G a second chance to translocate the tRNAs correctly. Binds to ribosomes in a GTP-dependent manner. The chain is Elongation factor 4 from Buchnera aphidicola subsp. Schizaphis graminum (strain Sg).